A 280-amino-acid polypeptide reads, in one-letter code: Trypsin zeta (280 aa).

An N-terminal signal peptide occupies residues 1 to 22 (MSSSWIVGLLAFLVSLVALTQG). Positions 23–38 (LPLLEDLDEKSVPDGR) are cleaved as a propeptide — activation peptide. Positions 39–278 (IVGGYATDIA…LRPWIDAVLA (240 aa)) constitute a Peptidase S1 domain. Cys-72 and Cys-88 are joined by a disulfide. Active-site charge relay system residues include His-87 and Asp-134. Disulfide bonds link Cys-198-Cys-218 and Cys-230-Cys-254. Catalysis depends on Ser-234, which acts as the Charge relay system.

It belongs to the peptidase S1 family.

Its subcellular location is the secreted. The protein localises to the extracellular space. It catalyses the reaction Preferential cleavage: Arg-|-Xaa, Lys-|-Xaa.. This Drosophila melanogaster (Fruit fly) protein is Trypsin zeta (zetaTry).